The following is a 25-amino-acid chain: Toxin LyeTx 1 (25 aa).

Leucine amide is present on Leu25.

Expressed by the venom gland.

It is found in the secreted. Functionally, has antimicrobial activity against Gram-positive bacterium S.aureus (MIC=3.79 uM), Gram-negative bacterium E.coli (MIC=7.81 uM) and yeasts C.krusei (MIC=26.3 uM) and C.neoformans (MIC=13.2 uM). Has hemolytic activity against rabbit erythrocytes. Forms pores in lipid bilayers in vitro; pore formation is reduced when cholesterol is present in the bilayers. The sequence is that of Toxin LyeTx 1 from Lycosa erythrognatha (Wolf spider).